Reading from the N-terminus, the 306-residue chain is Homoserine kinase (306 aa).

Proline 95 to alanine 105 is a binding site for ATP.

The protein belongs to the GHMP kinase family. Homoserine kinase subfamily.

Its subcellular location is the cytoplasm. It carries out the reaction L-homoserine + ATP = O-phospho-L-homoserine + ADP + H(+). The protein operates within amino-acid biosynthesis; L-threonine biosynthesis; L-threonine from L-aspartate: step 4/5. Catalyzes the ATP-dependent phosphorylation of L-homoserine to L-homoserine phosphate. The polypeptide is Homoserine kinase (Mycobacteroides abscessus (strain ATCC 19977 / DSM 44196 / CCUG 20993 / CIP 104536 / JCM 13569 / NCTC 13031 / TMC 1543 / L948) (Mycobacterium abscessus)).